The following is a 334-amino-acid chain: Formamidase (334 aa).

The region spanning 14–260 is the CN hydrolase domain; sequence FLVAAIQFPV…WEIVTGEIYP (247 aa). Residue Glu60 is the Proton acceptor of the active site. Lys133 functions as the Proton donor in the catalytic mechanism. Cys166 (nucleophile) is an active-site residue.

The protein belongs to the carbon-nitrogen hydrolase superfamily. Aliphatic amidase family.

It carries out the reaction formamide + H2O = formate + NH4(+). Functionally, is an aliphatic amidase with a restricted substrate specificity, as it only hydrolyzes formamide. The polypeptide is Formamidase (Helicobacter acinonychis (strain Sheeba)).